The primary structure comprises 285 residues: NAD kinase (285 aa).

Asp64 serves as the catalytic Proton acceptor. Residues 64-65 (DG), 138-139 (ND), Arg149, Arg166, Asp168, Leu176, 179-184 (SGYTIS), and Gln238 each bind NAD(+).

It belongs to the NAD kinase family. The cofactor is a divalent metal cation.

The protein localises to the cytoplasm. The enzyme catalyses NAD(+) + ATP = ADP + NADP(+) + H(+). Functionally, involved in the regulation of the intracellular balance of NAD and NADP, and is a key enzyme in the biosynthesis of NADP. Catalyzes specifically the phosphorylation on 2'-hydroxyl of the adenosine moiety of NAD to yield NADP. The chain is NAD kinase from Lawsonia intracellularis (strain PHE/MN1-00).